Here is a 153-residue protein sequence, read N- to C-terminus: Small ribosomal subunit protein uS5 (153 aa).

Residues 15–78 enclose the S5 DRBM domain; the sequence is FQEVVVNIGR…DDAFKNLIHV (64 aa).

This sequence belongs to the universal ribosomal protein uS5 family. In terms of assembly, part of the 30S ribosomal subunit. Contacts proteins S4 and S8.

Its function is as follows. With S4 and S12 plays an important role in translational accuracy. Functionally, located at the back of the 30S subunit body where it stabilizes the conformation of the head with respect to the body. This Helicobacter pylori (strain P12) protein is Small ribosomal subunit protein uS5.